The following is a 77-amino-acid chain: Protein RADIALIS-like 4 (77 aa).

In terms of domain architecture, SANT spans 6–61; that stretch reads MSTSSWTAREDKQFEMALAKFDKDTPDRWQKIARAVGGKSTEEVKRHYELLLRDVN.

As to expression, expressed just outside the vascular bundles in the rosette stem and the leaf traces. Not detected in floral primordia.

It is found in the nucleus. In terms of biological role, probable transcription factor. This is Protein RADIALIS-like 4 (RL4) from Arabidopsis thaliana (Mouse-ear cress).